Consider the following 331-residue polypeptide: Centriolar satellite-associated tubulin polyglutamylase complex regulator 1 (331 aa).

The segment at 1-111 is required for interaction with PCM1; that stretch reads MLSPERLALP…HCLLQLLCPD (111 aa). Residues 1 to 225 form a required for interaction with TPGS1, LRRC49, and TTLL1 region; that stretch reads MLSPERLALP…SCPPPALVKE (225 aa). Residues 112–331 form a required for interaction with TPGS2 region; sequence FPLELTQKAA…STEETDESET (220 aa). Residues 292-331 form a disordered region; sequence SCLPSRTPPRVGSPWKPLHRSRKLDAESDGSTEETDESET. Over residues 318–331 the composition is skewed to acidic residues; that stretch reads ESDGSTEETDESET. Phosphoserine is present on S319.

It belongs to the CSTPP1 family. As to quaternary structure, interacts with PCM1. Interacts with TTLL1, TPGS1, TPGS2 and LRRC49; the interactions link CSTPP1 to the complex TPGC. Binds to alpha-tubulin.

The protein localises to the cytoplasm. Its subcellular location is the cytoskeleton. It localises to the microtubule organizing center. It is found in the centrosome. The protein resides in the centriolar satellite. Functionally, regulator of the tubulin polyglutamylase complex (TPGC) that controls cytoskeletal organization, nuclear shape, and cilium disassembly by balancing microtubule and actin assembly. Regulates the assembly and stability of the TPGC and thereby modulates polyglutamylation of the microtubule, which antagonizes MAP4 binding. In Rattus norvegicus (Rat), this protein is Centriolar satellite-associated tubulin polyglutamylase complex regulator 1 (Cstpp1).